Reading from the N-terminus, the 538-residue chain is Ribosome-associated complex subunit SSZ1 (538 aa).

A peptide-binding domain region spans residues 400–538 (PVIVNTPHLK…KTGNAVKGEL (139 aa)). The segment at 464 to 484 (PIPKEENAEEDDESEWSDDEP) is disordered. The span at 470-484 (NAEEDDESEWSDDEP) shows a compositional bias: acidic residues. 2 positions are modified to phosphoserine: S477 and S480.

It belongs to the heat shock protein 70 family. As to quaternary structure, RAC is a heterodimer of the Hsp70/DnaK-type chaperone SSZ1 and the Hsp40/DnaJ-type chaperone ZUO1. RAC associates with ribosomes via ZUO1.

It localises to the cytoplasm. Functionally, component of the ribosome-associated complex (RAC), a heterodimeric chaperone complex involved in regulation of accurate translation termination and in folding or maintaining nascent polypeptides in a folding-competent state. RAC stimulates the ATPase activity of the ribosome-associated pool of Hsp70-type chaperones SSB1/SSB2 that bind to the nascent polypeptide chain. SSZ1 is required for ZUO1 to function efficiently as a J-protein for SSB1/SSB2. Also involved in pleiotropic drug resistance by post-translational activation of transcription factor PDR1. The protein is Ribosome-associated complex subunit SSZ1 (SSZ1) of Saccharomyces cerevisiae (strain ATCC 204508 / S288c) (Baker's yeast).